Here is a 118-residue protein sequence, read N- to C-terminus: DNA-binding protein MmarC6_0793 (118 aa).

Over residues 1–12 (MNPEEIRQRRLQ) the composition is skewed to basic and acidic residues. The tract at residues 1-33 (MNPEEIRQRRLQEMQAKAQEQGAQDPEAQRQMQ) is disordered. Low complexity predominate over residues 24–33 (QDPEAQRQMQ).

The protein belongs to the PDCD5 family.

In Methanococcus maripaludis (strain C6 / ATCC BAA-1332), this protein is DNA-binding protein MmarC6_0793.